A 474-amino-acid polypeptide reads, in one-letter code: Tumor necrosis factor receptor superfamily member 1B (474 aa).

Residues 1 to 22 (MAPAALWVALVVELQLWATGHT) form the signal peptide. The Extracellular segment spans residues 23 to 258 (VPAKVVLTPY…PIIEPSITGG (236 aa)). T30 carries O-linked (GalNAc...) threonine glycosylation. TNFR-Cys repeat units follow at residues 39 to 77 (QCQISQEYYDKKAQMCCAKCPPGQYAKHFCNKTSDTVCA), 78 to 119 (DCAA…NRVC), 120 to 164 (ACNA…VICS), and 165 to 203 (ACAPGTFSDTTSSTDVCRPHRICSILAIPGNASTDAVCA). 10 cysteine pairs are disulfide-bonded: C40/C54, C55/C68, C58/C76, C79/C94, C97/C111, C101/C119, C121/C127, C136/C145, C139/C163, and C166/C181. Residue N69 is glycosylated (N-linked (GlcNAc...) asparagine). N110 carries N-linked (GlcNAc...) asparagine glycosylation. N195 carries N-linked (GlcNAc...) asparagine glycosylation. 2 O-linked (GalNAc...) threonine glycosylation sites follow: T208 and T224. The segment covering 220-239 (QPEPTRSQPMDQEPGPSQTP) has biased composition (polar residues). The interval 220-241 (QPEPTRSQPMDQEPGPSQTPHI) is disordered. A helical membrane pass occupies residues 259–288 (ISLPIGLIVGLTTLGLLMLGLANCFILVQR). Over 289-474 (KKKPSCLQRE…WYDQIAVKVP (186 aa)) the chain is Cytoplasmic. Disordered regions lie at residues 321–378 (LTTA…GSHG) and 397–464 (SQCS…NQPG). 2 stretches are compositionally biased toward low complexity: residues 324–338 (APSSSSSSLESSASA) and 366–378 (GSRSSDSSHGSHG). S331 bears the Phosphoserine mark. Residues 429 to 442 (ECPSQSQWETTETL) are compositionally biased toward polar residues.

As to quaternary structure, binds to TRAF2. Interacts with BMX. Interacts (activated form) with XPNPEP3.

It is found in the membrane. Functionally, receptor with high affinity for TNFSF2/TNF-alpha and approximately 5-fold lower affinity for homotrimeric TNFSF1/lymphotoxin-alpha. The TRAF1/TRAF2 complex recruits the apoptotic suppressors BIRC2 and BIRC3 to TNFRSF1B/TNFR2. This chain is Tumor necrosis factor receptor superfamily member 1B (Tnfrsf1b), found in Rattus norvegicus (Rat).